Here is a 258-residue protein sequence, read N- to C-terminus: Methanol--corrinoid protein (258 aa).

Positions 30-124 (AEELYPKDEL…NSGATPKTKG (95 aa)) constitute a B12-binding N-terminal domain. A B12-binding domain is found at 123–248 (KGTVVCHVAE…DAIIAGTTDV (126 aa)). His136 is a methylcob(III)alamin binding site.

This sequence belongs to the methylamine corrinoid protein family. As to quaternary structure, heterotetramer, composed of 2 MtaB and 2 MtaC subunits.

In terms of biological role, harbors a corrinoid prosthetic group and acts as a methyl group carrier in methanogenesis in the methanol pathway. The methyl group of methanol is first transferred to the corrinoid prosthetic group of MtaC in the cob(I)amide oxidation state. This reaction is mediated by MtaB. The methyl group from MtaC is then transferred to coenzyme M by MtaA. This is Methanol--corrinoid protein (mtaC) from Methanosarcina barkeri (strain Fusaro / DSM 804).